We begin with the raw amino-acid sequence, 185 residues long: Pyridoxal 5'-phosphate synthase subunit PdxT (185 aa).

46–48 (GES) serves as a coordination point for L-glutamine. Cys78 (nucleophile) is an active-site residue. Residues Arg106 and 132-133 (IR) contribute to the L-glutamine site. Residues His168 and Glu170 each act as charge relay system in the active site.

The protein belongs to the glutaminase PdxT/SNO family. As to quaternary structure, in the presence of PdxS, forms a dodecamer of heterodimers. Only shows activity in the heterodimer.

It carries out the reaction aldehydo-D-ribose 5-phosphate + D-glyceraldehyde 3-phosphate + L-glutamine = pyridoxal 5'-phosphate + L-glutamate + phosphate + 3 H2O + H(+). The catalysed reaction is L-glutamine + H2O = L-glutamate + NH4(+). It functions in the pathway cofactor biosynthesis; pyridoxal 5'-phosphate biosynthesis. Functionally, catalyzes the hydrolysis of glutamine to glutamate and ammonia as part of the biosynthesis of pyridoxal 5'-phosphate. The resulting ammonia molecule is channeled to the active site of PdxS. The protein is Pyridoxal 5'-phosphate synthase subunit PdxT of Corynebacterium diphtheriae (strain ATCC 700971 / NCTC 13129 / Biotype gravis).